The primary structure comprises 535 residues: Prolyl 4-hydroxylase subunit alpha-2 (535 aa).

Residues 1–21 (MKLWVSALLMAWFGVLSCVQA) form the signal peptide. Asn-115 is a glycosylation site (N-linked (GlcNAc...) asparagine). One copy of the TPR repeat lies at 207 to 240 (SQVLDYLSYAVFQLGDLHRALELTRRLLSLDPSH). Asn-264 carries N-linked (GlcNAc...) asparagine glycosylation. The Fe2OG dioxygenase domain occupies 412–520 (TAELLQVANY…KWVSNKWFHE (109 aa)). Positions 430 and 432 each coordinate Fe cation. Lys-480 carries the post-translational modification N6-succinyllysine. Residue His-501 coordinates Fe cation. Residue Lys-511 participates in 2-oxoglutarate binding.

The protein belongs to the P4HA family. As to quaternary structure, heterotetramer of two alpha-2 chains and two beta chains (P4HB) (the beta chain is the multi-functional PDI), where P4HB plays the role of a structural subunit; this tetramer catalyzes the formation of 4-hydroxyproline in collagen. The cofactor is Fe(2+). It depends on L-ascorbate as a cofactor. As to expression, expressed in the heart, placenta, lung and pancreas.

Its subcellular location is the endoplasmic reticulum lumen. It catalyses the reaction L-prolyl-[collagen] + 2-oxoglutarate + O2 = trans-4-hydroxy-L-prolyl-[collagen] + succinate + CO2. With respect to regulation, inhibited by poly(L-proline) only at very high concentrations. Its function is as follows. Catalyzes the post-translational formation of 4-hydroxyproline in -Xaa-Pro-Gly- sequences in collagens and other proteins. In Homo sapiens (Human), this protein is Prolyl 4-hydroxylase subunit alpha-2 (P4HA2).